Here is a 181-residue protein sequence, read N- to C-terminus: Adenine phosphoribosyltransferase (181 aa).

Belongs to the purine/pyrimidine phosphoribosyltransferase family. In terms of assembly, homodimer.

The protein localises to the cytoplasm. It catalyses the reaction AMP + diphosphate = 5-phospho-alpha-D-ribose 1-diphosphate + adenine. Its pathway is purine metabolism; AMP biosynthesis via salvage pathway; AMP from adenine: step 1/1. Catalyzes a salvage reaction resulting in the formation of AMP, that is energically less costly than de novo synthesis. The protein is Adenine phosphoribosyltransferase of Brucella suis (strain ATCC 23445 / NCTC 10510).